The chain runs to 140 residues: Large ribosomal subunit protein uL16 (140 aa).

A compositionally biased stretch (basic residues) spans 1 to 17 (MPLMPKRVKHRKMHRGS). The interval 1-21 (MPLMPKRVKHRKMHRGSRSGN) is disordered.

Belongs to the universal ribosomal protein uL16 family. As to quaternary structure, part of the 50S ribosomal subunit.

Binds 23S rRNA and is also seen to make contacts with the A and possibly P site tRNAs. The polypeptide is Large ribosomal subunit protein uL16 (Akkermansia muciniphila (strain ATCC BAA-835 / DSM 22959 / JCM 33894 / BCRC 81048 / CCUG 64013 / CIP 107961 / Muc)).